The primary structure comprises 1382 residues: MPAYFQRPENALKRANEFLEVGKKQPALDVLYDVMKSKKHRTWQKIHEPIMLKYLELCVDLRKSHLAKEGLYQYKNICQQVNIKSLEDVVRAYLKMAEEKTEAAKEESQQMVLDIEDLDNIQTPESVLLSAVSGEDTQDRTDRLLLTPWVKFLWESYRQCLDLLRNNSRVERLYHDIAQQAFKFCLQYTRKAEFRKLCDNLRMHLSQIQRHHNQSTAINLNNPESQSMHLETRLVQLDSAISMELWQEAFKAVEDIHGLFSLSKKPPKPQLMANYYNKVSTVFWKSGNALFHASTLHRLYHLSREMRKNLTQDEMQRMSTRVLLATLSIPITPERTDIARLLDMDGIIVEKQRRLATLLGLQAPPTRIGLINDMVRFNVLQYVVPEVKDLYNWLEVEFNPLKLCERVTKVLNWVREQPEKEPELQQYVPQLQNNTILRLLQQVSQIYQSIEFSRLTSLVPFVDAFQLERAIVDAARHCDLQVRIDHTSRTLSFGSDLNYATREDAPIGPHLQSMPSEQIRNQLTAMSSVLAKALEVIKPAHILQEKEEQHQLAVTAYLKNSRKEHQRILARRQTIEERKERLESLNIQREKEELEQREAELQKVRKAEEERLRQEAKEREKERILQEHEQIKKKTVRERLEQIKKTELGAKAFKDIDIEDLEELDPDFIMAKQVEQLEKEKKELQERLKNQEKKIDYFERAKRLEEIPLIKSAYEEQRIKDMDLWEQQEEERITTMQLEREKALEHKNRMSRMLEDRDLFVMRLKAARQSVYEEKLKQFEERLAEERHNRLEERKRQRKEERRITYYREKEEEEQRRAEEQMLKEREERERAERAKREEELREYQERVKKLEEVERKKRQRELEIEERERRREEERRLGDSSLSRKDSRWGDRDSEGTWRKGPEADSEWRRGPPEKEWRRGEGRDEDRSHRRDEERPRRLGDDEDREPSLRPDDDRVPRRGMDDDRGPRRGPEEDRFSRRGADDDRPSWRNTDDDRPPRRIADEDRGNWRHADDDRPPRRGLDEDRGSWRTADEDRGPRRGMDDDRGPRRGGADDERSSWRNADDDRGPRRGLDDDRGPRRGMDDDRGPRRGMDDDRGPRRGMDDDRGPRRGLDDDRGPWRNADDDRIPRRGAEDDRGPWRNMDDDRLSRRADDDRFPRRGDDSRPGPWRPLVKPGGWREKEKAREESWGPPRESRPSEEREWDREKERDRDNQDREENDKDPERERDRERDVDREDRFRRPRDEGGWRRGPAEESSSWRDSSRRDDRDRDDRRRERDDRRDLRERRDLRDDRDRRGPPLRSEREEVSSWRRADDRKDDRVEERDPPRRVPPPALSRDRERDRDREREGEKEKASWRAEKDRESLRRTKNETDEDGWTTVRR.

An N6-acetyllysine modification is found at K68. A coiled-coil region spans residues 82–120 (NIKSLEDVVRAYLKMAEEKTEAAKEESQQMVLDIEDLDN). Residues 315–498 (MQRMSTRVLL…RTLSFGSDLN (184 aa)) enclose the PCI domain. Phosphoserine occurs at positions 492 and 584. The tract at residues 664–835 (LDPDFIMAKQ…REERERAERA (172 aa)) is interaction with EIF3B. Disordered stretches follow at residues 810-844 (KEEE…LREY) and 866-1382 (EERE…TVRR). 3 stretches are compositionally biased toward basic and acidic residues: residues 866–1165 (EERE…DDSR), 1177–1328 (GWRE…DPPR), and 1336–1371 (SRDR…TKNE). S881, S882, and S895 each carry phosphoserine. Repeat unit 1 spans residues 925–934 (DEDRSHRRDE). Residues 925–1172 (DEDRSHRRDE…DSRPGPWRPL (248 aa)) are 25 X 10 AA approximate tandem repeats of [DE]-[DE]-[DE]-R-[SEVGFPILV]-[HPSN]-[RSW]-[RL]-[DRGTIHN]-[EPMANLGDT]. Residues 935 to 942 (ERPRRLGD) form a 2; truncated repeat. A run of 20 repeats spans residues 943–952 (DEDREPSLRP), 953–962 (DDDRVPRRGM), 963–972 (DDDRGPRRGP), 973–982 (EEDRFSRRGA), 983–992 (DDDRPSWRNT), 993–1002 (DDDRPPRRIA), 1003–1012 (DEDRGNWRHA), 1013–1022 (DDDRPPRRGL), 1023–1032 (DEDRGSWRTA), 1033–1042 (DEDRGPRRGM), 1043–1052 (DDDRGPRRGG), 1054–1063 (DDERSSWRNA), 1064–1073 (DDDRGPRRGL), 1074–1083 (DDDRGPRRGM), 1084–1093 (DDDRGPRRGM), 1094–1103 (DDDRGPRRGM), 1104–1113 (DDDRGPRRGL), 1114–1123 (DDDRGPWRNA), 1124–1133 (DDDRIPRRGA), and 1134–1143 (EDDRGPWRNM). The residue at position 949 (S949) is a Phosphoserine. The residue at position 1028 (S1028) is a Phosphoserine. One copy of the 23; truncated repeat lies at 1144–1152 (DDDRLSRRA). Repeat 24 spans residues 1153 to 1162 (DDDRFPRRGD). The 25; approximate repeat unit spans residues 1163-1172 (DSRPGPWRPL). Phosphoserine is present on residues S1188, S1198, S1262, S1336, and S1364.

As to quaternary structure, interacts with EIF4G1. Component of the eukaryotic translation initiation factor 3 (eIF-3) complex, which is composed of 13 subunits: EIF3A, EIF3B, EIF3C, EIF3D, EIF3E, EIF3F, EIF3G, EIF3H, EIF3I, EIF3J, EIF3K, EIF3L and EIF3M. The eIF-3 complex appears to include 3 stable modules: module A is composed of EIF3A, EIF3B, EIF3G and EIF3I; module B is composed of EIF3F, EIF3H, and EIF3M; and module C is composed of EIF3C, EIF3D, EIF3E, EIF3L and EIF3K. EIF3C of module C binds EIF3B of module A and EIF3H of module B, thereby linking the three modules. EIF3J is a labile subunit that binds to the eIF-3 complex via EIF3B. The eIF-3 complex interacts with RPS6KB1 under conditions of nutrient depletion. Mitogenic stimulation leads to binding and activation of a complex composed of MTOR and RPTOR, leading to phosphorylation and release of RPS6KB1 and binding of EIF4B to eIF-3. Also interacts with KRT7 and PIWIL2. Phosphorylated. Phosphorylation is enhanced upon serum stimulation.

The protein resides in the cytoplasm. Functionally, RNA-binding component of the eukaryotic translation initiation factor 3 (eIF-3) complex, which is required for several steps in the initiation of protein synthesis. The eIF-3 complex associates with the 40S ribosome and facilitates the recruitment of eIF-1, eIF-1A, eIF-2:GTP:methionyl-tRNAi and eIF-5 to form the 43S pre-initiation complex (43S PIC). The eIF-3 complex stimulates mRNA recruitment to the 43S PIC and scanning of the mRNA for AUG recognition. The eIF-3 complex is also required for disassembly and recycling of post-termination ribosomal complexes and subsequently prevents premature joining of the 40S and 60S ribosomal subunits prior to initiation. The eIF-3 complex specifically targets and initiates translation of a subset of mRNAs involved in cell proliferation, including cell cycling, differentiation and apoptosis, and uses different modes of RNA stem-loop binding to exert either translational activation or repression. (Microbial infection) Essential for the initiation of translation on type-1 viral ribosomal entry sites (IRESs), like for HCV, PV, EV71 or BEV translation. In terms of biological role, (Microbial infection) In case of FCV infection, plays a role in the ribosomal termination-reinitiation event leading to the translation of VP2. The protein is Eukaryotic translation initiation factor 3 subunit A of Homo sapiens (Human).